Here is a 242-residue protein sequence, read N- to C-terminus: Small ribosomal subunit protein uS2 (242 aa).

It belongs to the universal ribosomal protein uS2 family.

In Pseudoalteromonas translucida (strain TAC 125), this protein is Small ribosomal subunit protein uS2.